Consider the following 373-residue polypeptide: UDP-N-acetylenolpyruvoylglucosamine reductase (373 aa).

Positions 30 to 203 (LACMADSVVT…SRVGFRLHTD (174 aa)) constitute an FAD-binding PCMH-type domain. Arg-180 is a catalytic residue. Ser-258 serves as the catalytic Proton donor. Residue Glu-356 is part of the active site.

This sequence belongs to the MurB family. FAD serves as cofactor.

The protein resides in the cytoplasm. It carries out the reaction UDP-N-acetyl-alpha-D-muramate + NADP(+) = UDP-N-acetyl-3-O-(1-carboxyvinyl)-alpha-D-glucosamine + NADPH + H(+). It functions in the pathway cell wall biogenesis; peptidoglycan biosynthesis. Its function is as follows. Cell wall formation. The sequence is that of UDP-N-acetylenolpyruvoylglucosamine reductase from Psychrobacter cryohalolentis (strain ATCC BAA-1226 / DSM 17306 / VKM B-2378 / K5).